Reading from the N-terminus, the 363-residue chain is Phosphoserine aminotransferase (363 aa).

Residue Arg42 coordinates L-glutamate. Residues 76-77 (AS), Trp101, Thr151, Asp170, and Gln193 each bind pyridoxal 5'-phosphate. Lys194 carries the post-translational modification N6-(pyridoxal phosphate)lysine. Position 234-235 (234-235 (NT)) interacts with pyridoxal 5'-phosphate.

It belongs to the class-V pyridoxal-phosphate-dependent aminotransferase family. SerC subfamily. As to quaternary structure, homodimer. Pyridoxal 5'-phosphate serves as cofactor.

Its subcellular location is the cytoplasm. The enzyme catalyses O-phospho-L-serine + 2-oxoglutarate = 3-phosphooxypyruvate + L-glutamate. It carries out the reaction 4-(phosphooxy)-L-threonine + 2-oxoglutarate = (R)-3-hydroxy-2-oxo-4-phosphooxybutanoate + L-glutamate. It participates in amino-acid biosynthesis; L-serine biosynthesis; L-serine from 3-phospho-D-glycerate: step 2/3. Catalyzes the reversible conversion of 3-phosphohydroxypyruvate to phosphoserine and of 3-hydroxy-2-oxo-4-phosphonooxybutanoate to phosphohydroxythreonine. The chain is Phosphoserine aminotransferase from Listeria innocua serovar 6a (strain ATCC BAA-680 / CLIP 11262).